The chain runs to 306 residues: Curved DNA-binding protein (306 aa).

The J domain occupies 5–69; sequence DYYAIMGVKP…QRRAEYDQMW (65 aa).

It is found in the cytoplasm. Its subcellular location is the nucleoid. Functionally, DNA-binding protein that preferentially recognizes a curved DNA sequence. It is probably a functional analog of DnaJ; displays overlapping activities with DnaJ, but functions under different conditions, probably acting as a molecular chaperone in an adaptive response to environmental stresses other than heat shock. Lacks autonomous chaperone activity; binds native substrates and targets them for recognition by DnaK. Its activity is inhibited by the binding of CbpM. The sequence is that of Curved DNA-binding protein from Escherichia coli (strain 55989 / EAEC).